The sequence spans 186 residues: Nicotinamide-nucleotide adenylyltransferase (186 aa).

Belongs to the archaeal NMN adenylyltransferase family.

It localises to the cytoplasm. It catalyses the reaction beta-nicotinamide D-ribonucleotide + ATP + H(+) = diphosphate + NAD(+). It functions in the pathway cofactor biosynthesis; NAD(+) biosynthesis; NAD(+) from nicotinamide D-ribonucleotide: step 1/1. The protein is Nicotinamide-nucleotide adenylyltransferase of Thermococcus sibiricus (strain DSM 12597 / MM 739).